The chain runs to 82 residues: ATP synthase subunit c, chloroplastic (82 aa).

Transmembrane regions (helical) follow at residues 7–27 (AASV…PGIG) and 57–77 (LAFM…LLFA).

It belongs to the ATPase C chain family. As to quaternary structure, F-type ATPases have 2 components, F(1) - the catalytic core - and F(0) - the membrane proton channel. F(1) has five subunits: alpha(3), beta(3), gamma(1), delta(1), epsilon(1). F(0) has four main subunits: a(1), b(1), b'(1) and c(10-14). The alpha and beta chains form an alternating ring which encloses part of the gamma chain. F(1) is attached to F(0) by a central stalk formed by the gamma and epsilon chains, while a peripheral stalk is formed by the delta, b and b' chains.

The protein resides in the plastid. It localises to the chloroplast thylakoid membrane. Its function is as follows. F(1)F(0) ATP synthase produces ATP from ADP in the presence of a proton or sodium gradient. F-type ATPases consist of two structural domains, F(1) containing the extramembraneous catalytic core and F(0) containing the membrane proton channel, linked together by a central stalk and a peripheral stalk. During catalysis, ATP synthesis in the catalytic domain of F(1) is coupled via a rotary mechanism of the central stalk subunits to proton translocation. Key component of the F(0) channel; it plays a direct role in translocation across the membrane. A homomeric c-ring of between 10-14 subunits forms the central stalk rotor element with the F(1) delta and epsilon subunits. The sequence is that of ATP synthase subunit c, chloroplastic from Porphyra purpurea (Red seaweed).